The following is a 348-amino-acid chain: Protein RecA (348 aa).

67 to 74 (GPESSGKT) serves as a coordination point for ATP.

It belongs to the RecA family.

The protein localises to the cytoplasm. Can catalyze the hydrolysis of ATP in the presence of single-stranded DNA, the ATP-dependent uptake of single-stranded DNA by duplex DNA, and the ATP-dependent hybridization of homologous single-stranded DNAs. It interacts with LexA causing its activation and leading to its autocatalytic cleavage. The chain is Protein RecA from Cutibacterium acnes (Propionibacterium acnes).